Here is a 404-residue protein sequence, read N- to C-terminus: Glycosylated lysosomal membrane protein (404 aa).

The first 35 residues, methionine 1 to glycine 35, serve as a signal peptide directing secretion. Residues glutamate 36–glycine 370 lie on the Lumenal side of the membrane. Asparagine 64, asparagine 85, asparagine 94, asparagine 133, asparagine 157, asparagine 166, asparagine 185, asparagine 228, and asparagine 331 each carry an N-linked (GlcNAc...) asparagine glycan. Residues isoleucine 371–leucine 391 form a helical membrane-spanning segment. Residues leucine 392 to asparagine 404 lie on the Cytoplasmic side of the membrane. The Lysosomal targeting motif signature appears at tyrosine 400–asparagine 404.

Belongs to the GLMP family. In terms of assembly, interacts (via lumenal domain) with lysosomal protein MFSD1; the interaction starts while both proteins are still in the endoplasmic reticulum and is required for stabilization of MFSD1 in lysosomes but has no direct effect on its targeting to lysosomes or transporter activity. In terms of processing, highly N-glycosylated. N-glycosylation is essential for GLMP stability and for MFSD1 lysosomal localization. As to expression, detected in brain, heart, liver, kidney, lung, intestine, testis and spleen. Expressed at highest levels in kidney cortex. However, another study reports highest expression levels in lung. Expressed in myoblasts with expression increasing during differentiation into myotubes.

The protein resides in the lysosome membrane. Required to protect lysosomal transporter MFSD1 from lysosomal proteolysis and for MFSD1 lysosomal localization. This Mus musculus (Mouse) protein is Glycosylated lysosomal membrane protein.